The primary structure comprises 808 residues: Phospholipase D alpha 1 (808 aa).

Positions 1–125 (MSKVLLHGTL…LDGDEVDKWI (125 aa)) constitute a C2 domain. Asp186 is a Ca(2+) binding site. In terms of domain architecture, PLD phosphodiesterase 1 spans 326 to 364 (TMFTHHQKIVVVDHELPRGGSQKRRVMSFVGGIDLCDGR). Catalysis depends on residues His331, Lys333, and Asp338. His331 contacts a 1,2-diacyl-sn-glycero-3-phosphate. Positions 370 and 404 each coordinate Ca(2+). 2 residues coordinate a 1,2-diacyl-sn-glycero-3-phosphate: Gln520 and His659. The region spanning 654-681 (FMIYVHSKMMIVDDEYIIVGSANINQRS) is the PLD phosphodiesterase 2 domain. Catalysis depends on residues His659, Lys661, and Asp666. Position 720 (Glu720) interacts with Ca(2+).

This sequence belongs to the phospholipase D family. C2-PLD subfamily. Interacts (via C2 domain) with CARDA (via RGD or KGE motifs). Ca(2+) serves as cofactor.

The catalysed reaction is a 1,2-diacyl-sn-glycero-3-phosphocholine + H2O = a 1,2-diacyl-sn-glycero-3-phosphate + choline + H(+). In terms of biological role, hydrolyzes glycerol-phospholipids at the terminal phosphodiesteric bond. Plays an important role in various cellular processes. In Cynara cardunculus (Cardoon), this protein is Phospholipase D alpha 1.